Reading from the N-terminus, the 439-residue chain is MKKPLRWLAALTVLLLPLSALAQQQGLTIDIVGGSASATPIAVIPMPYQGSGTAPQTDVSAVVGADLDRSGQFRTLPAAQIVEKPTRGTEVQFQTWRTLKQNYIVVGRVMDAGEGAYRVEYELFDVAKGERMLGLAMTARANAMRDVSHQMADAIYEKITGVRGAFWTRIAYVTASGKGGAMRYALMVADSDGYNPQTIVRSAEPLLSPNWSPDGKKLAYVSFERGNSSIYLQDIATGARELVSSFRGINGAPSFSPDGRRLALALSRSGNPEIYVMDLGSKQLTQLTNHFGIDTEPTWAPDGGSIYFTSDRGGRPQIYQVAASGGSANRVTFQGNYNATASVSFDGKKIAVAQGSGNTYRIAMMDRSLGSPSWSTLSPGSLDESPSFAPNASMVLYAAREGGRGVLYAVSSDARVRQRLVLADGDVREPAWGPYRTAH.

An N-terminal signal peptide occupies residues 1–22; sequence MKKPLRWLAALTVLLLPLSALA.

Belongs to the TolB family. As to quaternary structure, the Tol-Pal system is composed of five core proteins: the inner membrane proteins TolA, TolQ and TolR, the periplasmic protein TolB and the outer membrane protein Pal. They form a network linking the inner and outer membranes and the peptidoglycan layer.

Its subcellular location is the periplasm. Functionally, part of the Tol-Pal system, which plays a role in outer membrane invagination during cell division and is important for maintaining outer membrane integrity. The chain is Tol-Pal system protein TolB from Xanthomonas oryzae pv. oryzae (strain KACC10331 / KXO85).